An 80-amino-acid polypeptide reads, in one-letter code: UPF0512 protein Q (80 aa).

Belongs to the UPF0512 family.

This is UPF0512 protein Q from Dictyostelium discoideum (Social amoeba).